Here is a 154-residue protein sequence, read N- to C-terminus: Protein phosphatase 1 regulatory subunit 27 (154 aa).

ANK repeat units lie at residues 63–92 (SGLA…DIHQ) and 96–125 (AGWT…DRDA).

Interacts with DYSF and PPP1CA.

In terms of biological role, inhibits phosphatase activity of protein phosphatase 1 (PP1) complexes. The protein is Protein phosphatase 1 regulatory subunit 27 (PPP1R27) of Homo sapiens (Human).